The sequence spans 250 residues: Protein orai-2 (250 aa).

A run of 4 helical transmembrane segments spans residues 66-83, 94-114, 148-168, and 192-212; these read TSALLSGFAMVAMVEVQL, LIAFSACTTVLVAVHLFALLI, LAWGFSTVLGILLFLAEVVLL, and AALVSTIIMVPVGLIFVVFTI.

Belongs to the Orai family. Oligomerizes in homomeric and heteromeric ORAI complexes. Native CRAC channels most likely consist of hexameric ORAI heteromers, implying that diverse ORAI1, ORAI2 and ORAI3 subunit combinations with distinct biophysical properties can operate in a cell-type specific way. Interacts with STIM1; this regulates channel activity. Interacts with CRACR2A/EFCAB4B.

The protein localises to the cell membrane. It catalyses the reaction Ca(2+)(in) = Ca(2+)(out). CRAC channels are regulated by fast Ca(2+)-dependent inactivation (FCDI), a mechanism that limits Ca(2+) influx and cell toxicity. ORAI2 channels display prominent FCDI. Inhibited by lanthanides such as Gd(3+) ions. Its function is as follows. Pore-forming subunit of inward rectifying Ca(2+) release-activated Ca(2+) (CRAC) channels. Assembles with ORAI1 and ORAI3 to form hexameric CRAC channels that mediate Ca(2+) influx upon depletion of endoplasmic reticulum Ca(2+) store and channel activation by Ca(2+) sensor STIM1, a process known as store-operated Ca(2+) entry (SOCE). Various pore subunit combinations may account for distinct CRAC channel spatiotemporal and cell-type specific dynamics. ORAI1 mainly contributes to the generation of Ca(2+) plateaus involved in sustained Ca(2+) entry and is dispensable for cytosolic Ca(2+) oscillations, whereas ORAI2 and ORAI3 generate oscillatory patterns. CRAC channels assemble in Ca(2+) signaling microdomains where Ca(2+) influx is coupled to calmodulin and calcineurin signaling and activation of NFAT transcription factors recruited to ORAI1 via AKAP5. CRAC channels are the main pathway for Ca(2+) influx in T cells and promote the immune response to pathogens by activating NFAT-dependent cytokine and chemokine transcription. The chain is Protein orai-2 (Orai2) from Mus musculus (Mouse).